The sequence spans 237 residues: MSGDAPTPAHDPAAEGLEASVPLESVASINSDEGQSSAQSAPLADNEARLQQLEQEHSSLREEHETLRSQYMRIAADFDNFRKRQSRDQDDLRFQLICTTLSEILPVVDNFERARQQLEPQGEEAQALHRSYQGLYKQLVDVLKQMGVASMRVVGQVFDPTLHEAVSREPSEEHPEDVVTEELQRGYHLNGRVLRHALVKVSMGPGPQSGASPSSAQPNDDSTATFQGEADPAQPGV.

2 disordered regions span residues 1–52 (MSGD…RLQQ) and 200–237 (KVSM…QPGV). The segment covering 27 to 40 (ASINSDEGQSSAQS) has biased composition (polar residues). The segment covering 204 to 218 (GPGPQSGASPSSAQP) has biased composition (low complexity).

The protein belongs to the GrpE family. Homodimer.

The protein resides in the cytoplasm. Participates actively in the response to hyperosmotic and heat shock by preventing the aggregation of stress-denatured proteins, in association with DnaK and GrpE. It is the nucleotide exchange factor for DnaK and may function as a thermosensor. Unfolded proteins bind initially to DnaJ; upon interaction with the DnaJ-bound protein, DnaK hydrolyzes its bound ATP, resulting in the formation of a stable complex. GrpE releases ADP from DnaK; ATP binding to DnaK triggers the release of the substrate protein, thus completing the reaction cycle. Several rounds of ATP-dependent interactions between DnaJ, DnaK and GrpE are required for fully efficient folding. The sequence is that of Protein GrpE from Prochlorococcus marinus (strain MIT 9313).